A 121-amino-acid chain; its full sequence is uncharacterized protein (121 aa).

3 helical membrane-spanning segments follow: residues 26–46 (YACS…AVAT), 57–77 (SIPL…SVLI), and 90–110 (SFCF…LLCV).

Its subcellular location is the membrane. This is an uncharacterized protein from Saccharomyces cerevisiae (strain ATCC 204508 / S288c) (Baker's yeast).